The primary structure comprises 641 residues: MIKISFFDNQIQEFISGTTPLAIWKEHLSEHFKKPVAALFNNQPIELDFPLKKNGNLEILTESDPKSLEVLNHSTAHLMAQAVARLYPDALFTVGPAIKEGFYYDIDFQKHTISEKDFLTIEKVMHQISLENHKITREEISFEKAKKLFAYNPYKQVLLEKFRDQTISIYRQGEFFDLCRGVHVIKTNLIKHFKILKISGAYFQGDAKNKTLTRIYGTSFFKKQALADYLQLLEERKERDHKKINKELDLFMFNKEVGLGLPFWLPKGATVRRIVERYIVDKELSYDYHHVYTPIMANTELYRISGHLDHYASNMFPIMSLENGEKLVLRPMNCPHHMMIYKKNPHSYKELPLRIAELGMMHRFEKSGAVSGLQRVREMTLNDAHIFARPDQIKEEIKKIINLILEVYCDFNIKNYELRLSYRNPNNTEKYFNDDQMWYNAEKTLKETIKELGLPFKEAIGEAAFYGPKLDVQVFNALGNEETLSTVQLDFLLPQKFDLTFIGEDNKHHRPVVIHRAVVSTMERFLAHLVEETKGVFPLWLAPVQVLLIPVSAPLHFEFSQKIKETLQLQNFRVEINSKDNTLGYKIREAQKLKIPYQVVIGDHEMINNLITFRKYGSHLQTTIKVDEFVSLLKDKVLQKK.

Residues 1-61 (MIKISFFDNQ…KKNGNLEILT (61 aa)) form the TGS domain. Positions 240–538 (DHKKINKELD…LVEETKGVFP (299 aa)) are catalytic. Positions 334, 385, and 515 each coordinate Zn(2+).

This sequence belongs to the class-II aminoacyl-tRNA synthetase family. In terms of assembly, homodimer. The cofactor is Zn(2+).

Its subcellular location is the cytoplasm. It carries out the reaction tRNA(Thr) + L-threonine + ATP = L-threonyl-tRNA(Thr) + AMP + diphosphate + H(+). Functionally, catalyzes the attachment of threonine to tRNA(Thr) in a two-step reaction: L-threonine is first activated by ATP to form Thr-AMP and then transferred to the acceptor end of tRNA(Thr). Also edits incorrectly charged L-seryl-tRNA(Thr). The polypeptide is Threonine--tRNA ligase (Aster yellows witches'-broom phytoplasma (strain AYWB)).